Consider the following 145-residue polypeptide: Sec-independent protein translocase protein TatB (145 aa).

A helical membrane pass occupies residues 1 to 21 (MLDVGMTELLCFAIIAILVLG).

It belongs to the TatB family. The Tat system comprises two distinct complexes: a TatABC complex, containing multiple copies of TatA, TatB and TatC subunits, and a separate TatA complex, containing only TatA subunits. Substrates initially bind to the TatABC complex, which probably triggers association of the separate TatA complex to form the active translocon.

It localises to the cell inner membrane. In terms of biological role, part of the twin-arginine translocation (Tat) system that transports large folded proteins containing a characteristic twin-arginine motif in their signal peptide across membranes. Together with TatC, TatB is part of a receptor directly interacting with Tat signal peptides. TatB may form an oligomeric binding site that transiently accommodates folded Tat precursor proteins before their translocation. This is Sec-independent protein translocase protein TatB from Acinetobacter baumannii (strain ATCC 17978 / DSM 105126 / CIP 53.77 / LMG 1025 / NCDC KC755 / 5377).